A 180-amino-acid chain; its full sequence is NADH-quinone oxidoreductase subunit I (180 aa).

2 consecutive 4Fe-4S ferredoxin-type domains span residues 50–80 (LTRDPDGEERCVACNLCAVACPVGCISLQKA) and 90–119 (EFFRVNFSRCIFCGFCEEACPTTAIQLTPD). Residues Cys60, Cys63, Cys66, Cys70, Cys99, Cys102, Cys105, and Cys109 each contribute to the [4Fe-4S] cluster site.

It belongs to the complex I 23 kDa subunit family. NDH-1 is composed of 13 different subunits. Subunits NuoA, H, J, K, L, M, N constitute the membrane sector of the complex. The cofactor is [4Fe-4S] cluster.

It localises to the cell inner membrane. It carries out the reaction a quinone + NADH + 5 H(+)(in) = a quinol + NAD(+) + 4 H(+)(out). In terms of biological role, NDH-1 shuttles electrons from NADH, via FMN and iron-sulfur (Fe-S) centers, to quinones in the respiratory chain. The immediate electron acceptor for the enzyme in this species is believed to be ubiquinone. Couples the redox reaction to proton translocation (for every two electrons transferred, four hydrogen ions are translocated across the cytoplasmic membrane), and thus conserves the redox energy in a proton gradient. The polypeptide is NADH-quinone oxidoreductase subunit I (Pectobacterium atrosepticum (strain SCRI 1043 / ATCC BAA-672) (Erwinia carotovora subsp. atroseptica)).